The chain runs to 211 residues: tRNA (guanine-N(7)-)-methyltransferase (211 aa).

Residues Asp-40, Glu-65, Asn-92, and Asp-118 each contribute to the S-adenosyl-L-methionine site. Asp-118 is a catalytic residue. Substrate-binding residues include Lys-122 and Asp-154.

Belongs to the class I-like SAM-binding methyltransferase superfamily. TrmB family.

It catalyses the reaction guanosine(46) in tRNA + S-adenosyl-L-methionine = N(7)-methylguanosine(46) in tRNA + S-adenosyl-L-homocysteine. The protein operates within tRNA modification; N(7)-methylguanine-tRNA biosynthesis. In terms of biological role, catalyzes the formation of N(7)-methylguanine at position 46 (m7G46) in tRNA. The protein is tRNA (guanine-N(7)-)-methyltransferase of Microcystis aeruginosa (strain NIES-843 / IAM M-2473).